We begin with the raw amino-acid sequence, 446 residues long: WD repeat domain phosphoinositide-interacting protein 1 (446 aa).

7 WD repeats span residues 3 to 42, 47 to 88, 92 to 126, 131 to 173, 177 to 216, 222 to 261, and 304 to 343; these read AEAA…LFSL, QLDQ…VYHF, TEIC…IHNI, LLKT…LYDG, KTVC…VFSV, LYEF…IFKL, and FATA…MYNL. A Nuclear receptor interaction motif is present at residues 131–136; sequence LLKTLL. Residues 225 to 228 carry the L/FRRG motif motif; sequence FRRG. The tract at residues 386–406 is disordered; that stretch reads ARPSASSASTVPGYSEDGGAL.

It belongs to the WD repeat PROPPIN family. As to quaternary structure, interacts with androgen receptor (AR) and the estrogen receptors ESR1 and ESR2. Interacts with WIPI2. Interacts with WDR45. Interacts with ATG16L1. May interact with NUDC. In terms of tissue distribution, ubiquitously expressed. Highly expressed in skeletal muscle, heart, testis, pancreas and placenta. Highly expressed in G361, Sk-mel-28, Sk-mel-13, WM852 and WM451 cells. Up-regulated in a variety of tumor tissues.

The protein resides in the golgi apparatus. Its subcellular location is the trans-Golgi network. It localises to the endosome. The protein localises to the cytoplasmic vesicle. It is found in the clathrin-coated vesicle. The protein resides in the preautophagosomal structure membrane. Its subcellular location is the cytoplasm. It localises to the cytoskeleton. Component of the autophagy machinery that controls the major intracellular degradation process by which cytoplasmic materials are packaged into autophagosomes and delivered to lysosomes for degradation. Plays an important role in starvation- and calcium-mediated autophagy, as well as in mitophagy. Functions downstream of the ULK1 and PI3-kinases that produce phosphatidylinositol 3-phosphate (PtdIns3P) on membranes of the endoplasmic reticulum once activated. Binds phosphatidylinositol 3-phosphate (PtdIns3P), and maybe other phosphoinositides including PtdIns3,5P2 and PtdIns5P, and is recruited to phagophore assembly sites at the endoplasmic reticulum membranes. There, it assists WIPI2 in the recruitment of ATG12-ATG5-ATG16L1, a complex that directly controls the elongation of the nascent autophagosomal membrane. Together with WDR45/WIPI4, promotes ATG2 (ATG2A or ATG2B)-mediated lipid transfer by enhancing ATG2-association with phosphatidylinositol 3-monophosphate (PI3P)-containing membranes. Involved in xenophagy of Staphylococcus aureus. Invading S.aureus cells become entrapped in autophagosome-like WIPI1 positive vesicles targeted for lysosomal degradation. Also plays a distinct role in controlling the transcription of melanogenic enzymes and melanosome maturation, a process that is distinct from starvation-induced autophagy. May also regulate the trafficking of proteins involved in the mannose-6-phosphate receptor (MPR) recycling pathway. This Homo sapiens (Human) protein is WD repeat domain phosphoinositide-interacting protein 1 (WIPI1).